We begin with the raw amino-acid sequence, 48 residues long: Ambineela (48 aa).

In terms of assembly, monomer. The blue color is due to an unidentified non-fluorescent cofactor, covalently bound to it.

Functionally, ambineela is a blue protein and has a pI of 8.7. This Acidianus ambivalens (Desulfurolobus ambivalens) protein is Ambineela.